We begin with the raw amino-acid sequence, 364 residues long: Putative agmatine deiminase (364 aa).

The Amidino-cysteine intermediate role is filled by C355.

It belongs to the agmatine deiminase family.

It catalyses the reaction agmatine + H2O = N-carbamoylputrescine + NH4(+). This is Putative agmatine deiminase from Mycoplasma capricolum subsp. capricolum (strain California kid / ATCC 27343 / NCTC 10154).